Reading from the N-terminus, the 181-residue chain is Heavy metal-associated isoprenylated plant protein 46 (181 aa).

The HMA domain maps to 2-71 (KQKILIRVTM…KVAFAELVSV (70 aa)). The disordered stretch occupies residues 74 to 121 (VEPPKKEDEKKGGDGKGAEGKGGDQKGGDKKGPDDKEPPEPKPVPCYP). Residues 75–113 (EPPKKEDEKKGGDGKGAEGKGGDQKGGDKKGPDDKEPPE) show a composition bias toward basic and acidic residues. The residue at position 178 (C178) is a Cysteine methyl ester. C178 carries S-farnesyl cysteine lipidation. Residues 179 to 181 (KIM) constitute a propeptide, removed in mature form.

It belongs to the HIPP family.

Its function is as follows. Probable heavy-metal-binding protein. The sequence is that of Heavy metal-associated isoprenylated plant protein 46 from Arabidopsis thaliana (Mouse-ear cress).